A 398-amino-acid polypeptide reads, in one-letter code: Acetate kinase 1 (398 aa).

Asn-10 is a Mg(2+) binding site. Lys-17 provides a ligand contact to ATP. Arg-89 serves as a coordination point for substrate. Catalysis depends on Asp-146, which acts as the Proton donor/acceptor. ATP is bound by residues 206-210 (HLGNG), 281-283 (DCR), and 329-333 (GIGEN). Glu-384 contacts Mg(2+).

It belongs to the acetokinase family. In terms of assembly, homodimer. It depends on Mg(2+) as a cofactor. Requires Mn(2+) as cofactor.

The protein localises to the cytoplasm. It carries out the reaction acetate + ATP = acetyl phosphate + ADP. Its pathway is metabolic intermediate biosynthesis; acetyl-CoA biosynthesis; acetyl-CoA from acetate: step 1/2. Catalyzes the formation of acetyl phosphate from acetate and ATP. Can also catalyze the reverse reaction. This Neisseria meningitidis serogroup A / serotype 4A (strain DSM 15465 / Z2491) protein is Acetate kinase 1.